The following is a 694-amino-acid chain: Polyphosphate kinase (694 aa).

ATP is bound at residue Asn-45. Residues Arg-367 and Arg-397 each coordinate Mg(2+). The active-site Phosphohistidine intermediate is the His-427. ATP-binding residues include Tyr-460, Arg-553, and His-580.

The protein belongs to the polyphosphate kinase 1 (PPK1) family. Mg(2+) is required as a cofactor. An intermediate of this reaction is the autophosphorylated ppk in which a phosphate is covalently linked to a histidine residue through a N-P bond.

It carries out the reaction [phosphate](n) + ATP = [phosphate](n+1) + ADP. Catalyzes the reversible transfer of the terminal phosphate of ATP to form a long-chain polyphosphate (polyP). The protein is Polyphosphate kinase of Campylobacter jejuni subsp. doylei (strain ATCC BAA-1458 / RM4099 / 269.97).